Consider the following 150-residue polypeptide: Large ribosomal subunit protein uL11 (150 aa).

It belongs to the universal ribosomal protein uL11 family. As to quaternary structure, part of the ribosomal stalk of the 50S ribosomal subunit. Interacts with L10 and the large rRNA to form the base of the stalk. L10 forms an elongated spine to which L12 dimers bind in a sequential fashion forming a multimeric L10(L12)X complex. Post-translationally, one or more lysine residues are methylated.

In terms of biological role, forms part of the ribosomal stalk which helps the ribosome interact with GTP-bound translation factors. The sequence is that of Large ribosomal subunit protein uL11 from Azobacteroides pseudotrichonymphae genomovar. CFP2.